The following is a 540-amino-acid chain: NADH-quinone oxidoreductase subunit N (540 aa).

The next 14 membrane-spanning stretches (helical) occupy residues leucine 24–leucine 44, leucine 54–threonine 74, proline 88–alanine 108, alanine 158–phenylalanine 178, leucine 184–leucine 204, tyrosine 219–glycine 239, alanine 263–phenylalanine 283, proline 295–leucine 315, proline 331–glutamine 351, methionine 357–asparagine 377, methionine 385–valine 405, valine 428–phenylalanine 448, glycine 462–valine 482, and methionine 505–proline 525.

The protein belongs to the complex I subunit 2 family. In terms of assembly, NDH-1 is composed of 14 different subunits. Subunits NuoA, H, J, K, L, M, N constitute the membrane sector of the complex.

Its subcellular location is the cell membrane. It catalyses the reaction a quinone + NADH + 5 H(+)(in) = a quinol + NAD(+) + 4 H(+)(out). NDH-1 shuttles electrons from NADH, via FMN and iron-sulfur (Fe-S) centers, to quinones in the respiratory chain. The immediate electron acceptor for the enzyme in this species is believed to be a menaquinone. Couples the redox reaction to proton translocation (for every two electrons transferred, four hydrogen ions are translocated across the cytoplasmic membrane), and thus conserves the redox energy in a proton gradient. The chain is NADH-quinone oxidoreductase subunit N from Rhodococcus opacus (strain B4).